A 242-amino-acid polypeptide reads, in one-letter code: Probable transcriptional regulatory protein Bphyt_1301 (242 aa).

The protein belongs to the TACO1 family.

Its subcellular location is the cytoplasm. This is Probable transcriptional regulatory protein Bphyt_1301 from Paraburkholderia phytofirmans (strain DSM 17436 / LMG 22146 / PsJN) (Burkholderia phytofirmans).